A 70-amino-acid chain; its full sequence is Small ribosomal subunit protein bS21A (70 aa).

This sequence belongs to the bacterial ribosomal protein bS21 family.

This is Small ribosomal subunit protein bS21A (rpsU1) from Burkholderia mallei (strain ATCC 23344).